We begin with the raw amino-acid sequence, 259 residues long: UPF0246 protein PputW619_0896 (259 aa).

The protein belongs to the UPF0246 family.

The chain is UPF0246 protein PputW619_0896 from Pseudomonas putida (strain W619).